The chain runs to 26 residues: DDLHPFNENNMYYGCKGLSNSNKFED.

Toxin b is a heterodimer composed of toxin alpha and toxin beta. As to expression, expressed by the venom gland.

The protein localises to the secreted. In terms of biological role, binds to sodium channels (Nav) and affects the channel activation process. The polypeptide is Toxin b subunit alpha (Androctonus crassicauda (Arabian fat-tailed scorpion)).